A 239-amino-acid polypeptide reads, in one-letter code: Ribosomal RNA small subunit methyltransferase G (239 aa).

S-adenosyl-L-methionine is bound by residues G78, F83, 129–130 (AE), and R148.

It belongs to the methyltransferase superfamily. RNA methyltransferase RsmG family.

The protein resides in the cytoplasm. Specifically methylates the N7 position of a guanine in 16S rRNA. The protein is Ribosomal RNA small subunit methyltransferase G of Clostridium tetani (strain Massachusetts / E88).